The primary structure comprises 192 residues: Xanthine phosphoribosyltransferase (192 aa).

Xanthine contacts are provided by Leu-20 and Asn-27. 128-132 (ANGQA) is a 5-phospho-alpha-D-ribose 1-diphosphate binding site. Lys-156 lines the xanthine pocket.

Belongs to the purine/pyrimidine phosphoribosyltransferase family. Xpt subfamily. As to quaternary structure, homodimer.

It is found in the cytoplasm. The catalysed reaction is XMP + diphosphate = xanthine + 5-phospho-alpha-D-ribose 1-diphosphate. The protein operates within purine metabolism; XMP biosynthesis via salvage pathway; XMP from xanthine: step 1/1. In terms of biological role, converts the preformed base xanthine, a product of nucleic acid breakdown, to xanthosine 5'-monophosphate (XMP), so it can be reused for RNA or DNA synthesis. The polypeptide is Xanthine phosphoribosyltransferase (Listeria monocytogenes serotype 4b (strain F2365)).